Reading from the N-terminus, the 176-residue chain is ATP synthase subunit b (176 aa).

A helical transmembrane segment spans residues 24-43 (FAFRVVNFVIFAGIIWKAAG).

This sequence belongs to the ATPase B chain family. In terms of assembly, F-type ATPases have 2 components, F(1) - the catalytic core - and F(0) - the membrane proton channel. F(1) has five subunits: alpha(3), beta(3), gamma(1), delta(1), epsilon(1). F(0) has three main subunits: a(1), b(2) and c(10-14). The alpha and beta chains form an alternating ring which encloses part of the gamma chain. F(1) is attached to F(0) by a central stalk formed by the gamma and epsilon chains, while a peripheral stalk is formed by the delta and b chains.

Its subcellular location is the cell inner membrane. Its function is as follows. F(1)F(0) ATP synthase produces ATP from ADP in the presence of a proton or sodium gradient. F-type ATPases consist of two structural domains, F(1) containing the extramembraneous catalytic core and F(0) containing the membrane proton channel, linked together by a central stalk and a peripheral stalk. During catalysis, ATP synthesis in the catalytic domain of F(1) is coupled via a rotary mechanism of the central stalk subunits to proton translocation. Functionally, component of the F(0) channel, it forms part of the peripheral stalk, linking F(1) to F(0). The sequence is that of ATP synthase subunit b from Nitratidesulfovibrio vulgaris (strain ATCC 29579 / DSM 644 / CCUG 34227 / NCIMB 8303 / VKM B-1760 / Hildenborough) (Desulfovibrio vulgaris).